The chain runs to 335 residues: Dihydroorotate dehydrogenase (quinone) (335 aa).

FMN contacts are provided by residues 58-62 (AGADK) and Thr-82. Lys-62 lines the substrate pocket. Substrate is bound at residue 107–111 (NRNGF). FMN contacts are provided by Asn-135 and Asn-168. Asn-168 provides a ligand contact to substrate. Ser-171 (nucleophile) is an active-site residue. A substrate-binding site is contributed by Asn-173. Positions 213 and 241 each coordinate FMN. 242–243 (NT) lines the substrate pocket. FMN is bound by residues Gly-264, Gly-293, and 314-315 (YS).

Belongs to the dihydroorotate dehydrogenase family. Type 2 subfamily. In terms of assembly, monomer. FMN is required as a cofactor.

Its subcellular location is the cell membrane. The enzyme catalyses (S)-dihydroorotate + a quinone = orotate + a quinol. It participates in pyrimidine metabolism; UMP biosynthesis via de novo pathway; orotate from (S)-dihydroorotate (quinone route): step 1/1. In terms of biological role, catalyzes the conversion of dihydroorotate to orotate with quinone as electron acceptor. The protein is Dihydroorotate dehydrogenase (quinone) of Actinobacillus pleuropneumoniae serotype 3 (strain JL03).